A 1058-amino-acid chain; its full sequence is Carbamoyl phosphate synthase large chain (1058 aa).

A carboxyphosphate synthetic domain region spans residues Met1–Glu401. Residues Arg129, Arg169, Gly175, Gly176, Arg208, Ile210, Glu215, Gly241, Ile242, His243, Gln284, and Glu298 each coordinate ATP. Residues Lys133 to Val327 form the ATP-grasp 1 domain. Gln284, Glu298, and Asn300 together coordinate Mg(2+). Positions 284, 298, and 300 each coordinate Mn(2+). The segment at Ile402–Ser546 is oligomerization domain. Residues Val547–Asn929 are carbamoyl phosphate synthetic domain. One can recognise an ATP-grasp 2 domain in the interval Glu671–Leu861. Residues Arg707, Ser746, Ile748, Glu752, Gly777, Val778, His779, Ser780, Gln820, and Glu832 each coordinate ATP. The Mg(2+) site is built by Gln820, Glu832, and Asn834. The Mn(2+) site is built by Gln820, Glu832, and Asn834. The MGS-like domain maps to Ser930 to Ile1058. The interval Ser930 to Ile1058 is allosteric domain.

Belongs to the CarB family. In terms of assembly, composed of two chains; the small (or glutamine) chain promotes the hydrolysis of glutamine to ammonia, which is used by the large (or ammonia) chain to synthesize carbamoyl phosphate. Tetramer of heterodimers (alpha,beta)4. Requires Mg(2+) as cofactor. Mn(2+) is required as a cofactor.

It carries out the reaction hydrogencarbonate + L-glutamine + 2 ATP + H2O = carbamoyl phosphate + L-glutamate + 2 ADP + phosphate + 2 H(+). The catalysed reaction is hydrogencarbonate + NH4(+) + 2 ATP = carbamoyl phosphate + 2 ADP + phosphate + 2 H(+). Its pathway is amino-acid biosynthesis; L-arginine biosynthesis; carbamoyl phosphate from bicarbonate: step 1/1. The protein operates within pyrimidine metabolism; UMP biosynthesis via de novo pathway; (S)-dihydroorotate from bicarbonate: step 1/3. Functionally, large subunit of the glutamine-dependent carbamoyl phosphate synthetase (CPSase). CPSase catalyzes the formation of carbamoyl phosphate from the ammonia moiety of glutamine, carbonate, and phosphate donated by ATP, constituting the first step of 2 biosynthetic pathways, one leading to arginine and/or urea and the other to pyrimidine nucleotides. The large subunit (synthetase) binds the substrates ammonia (free or transferred from glutamine from the small subunit), hydrogencarbonate and ATP and carries out an ATP-coupled ligase reaction, activating hydrogencarbonate by forming carboxy phosphate which reacts with ammonia to form carbamoyl phosphate. The protein is Carbamoyl phosphate synthase large chain of Streptococcus pyogenes serotype M6 (strain ATCC BAA-946 / MGAS10394).